Here is a 100-residue protein sequence, read N- to C-terminus: Putative pterin-4-alpha-carbinolamine dehydratase (100 aa).

This sequence belongs to the pterin-4-alpha-carbinolamine dehydratase family.

It catalyses the reaction (4aS,6R)-4a-hydroxy-L-erythro-5,6,7,8-tetrahydrobiopterin = (6R)-L-erythro-6,7-dihydrobiopterin + H2O. The protein is Putative pterin-4-alpha-carbinolamine dehydratase of Rhodopseudomonas palustris (strain TIE-1).